Consider the following 428-residue polypeptide: Enolase (428 aa).

Glutamine 162 is a binding site for (2R)-2-phosphoglycerate. Glutamate 204 (proton donor) is an active-site residue. 3 residues coordinate Mg(2+): aspartate 241, glutamate 286, and aspartate 313. (2R)-2-phosphoglycerate contacts are provided by lysine 338, arginine 367, serine 368, and lysine 389. The Proton acceptor role is filled by lysine 338.

It belongs to the enolase family. Component of the RNA degradosome, a multiprotein complex involved in RNA processing and mRNA degradation. Mg(2+) is required as a cofactor.

It is found in the cytoplasm. The protein resides in the secreted. The protein localises to the cell surface. The enzyme catalyses (2R)-2-phosphoglycerate = phosphoenolpyruvate + H2O. Its pathway is carbohydrate degradation; glycolysis; pyruvate from D-glyceraldehyde 3-phosphate: step 4/5. Its function is as follows. Catalyzes the reversible conversion of 2-phosphoglycerate (2-PG) into phosphoenolpyruvate (PEP). It is essential for the degradation of carbohydrates via glycolysis. The polypeptide is Enolase (Vesicomyosocius okutanii subsp. Calyptogena okutanii (strain HA)).